A 270-amino-acid polypeptide reads, in one-letter code: tRNA pseudouridine synthase A (270 aa).

Asp51 serves as the catalytic Nucleophile. Residue Tyr109 participates in substrate binding.

It belongs to the tRNA pseudouridine synthase TruA family. As to quaternary structure, homodimer.

The enzyme catalyses uridine(38/39/40) in tRNA = pseudouridine(38/39/40) in tRNA. Functionally, formation of pseudouridine at positions 38, 39 and 40 in the anticodon stem and loop of transfer RNAs. The polypeptide is tRNA pseudouridine synthase A (Burkholderia ambifaria (strain ATCC BAA-244 / DSM 16087 / CCUG 44356 / LMG 19182 / AMMD) (Burkholderia cepacia (strain AMMD))).